A 530-amino-acid polypeptide reads, in one-letter code: UDP-glucuronosyltransferase 1A9 (530 aa).

The N-terminal stretch at 1-25 is a signal peptide; that stretch reads MACTGWTSPLPLCVCLLLTCGFAEA. Asn-71 is a glycosylation site (N-linked (GlcNAc...) asparagine). Lys-99 carries the post-translational modification N6-succinyllysine. Asn-292 and Asn-344 each carry an N-linked (GlcNAc...) asparagine glycan. A helical transmembrane segment spans residues 488 to 504; it reads VIGFLLAVVLTVAFITF.

It belongs to the UDP-glycosyltransferase family. As to quaternary structure, homodimer. Homooligomer. Interacts with UGT1A1, UGT1A3, UGT1A4, UGT1A6, UGT1A7, UGT1A8 and UGT1A10 to form heterodimers. Isoform 1 interacts with isoform 2/i2 suggesting that oligomerization is involved in negative regulation of transferase activity by isoform 2. Isoform 1 also interacts with respective i2 isoforms of UGT1A1, UGT1A3, UGT1A4, UGT1A6, UGT1A7, UGT1A8 and UGT1A10. As to expression, expressed in liver, kidney, colon, esophagus and small intestine.

It localises to the endoplasmic reticulum membrane. The enzyme catalyses glucuronate acceptor + UDP-alpha-D-glucuronate = acceptor beta-D-glucuronoside + UDP + H(+). The catalysed reaction is 2-hydroxy-17beta-estradiol + UDP-alpha-D-glucuronate = 2-hydroxy-17beta-estradiol 3-O-(beta-D-glucuronate) + UDP + H(+). It carries out the reaction 4-hydroxy-17beta-estradiol + UDP-alpha-D-glucuronate = 17beta-estradiol 4-O-(beta-D-glucuronate) + UDP + H(+). It catalyses the reaction 2-hydroxyestrone + UDP-alpha-D-glucuronate = 2-hydroxyestrone 3-O-(beta-D-glucuronate) + UDP + H(+). The enzyme catalyses 4-hydroxyestrone + UDP-alpha-D-glucuronate = estrone 4-O-(beta-D-glucuronate) + UDP + H(+). The catalysed reaction is prunetin + UDP-alpha-D-glucuronate = prunetin-5-O-beta-D-glucuronide + UDP. It carries out the reaction 8-iso-prostaglandin F2alpha + UDP-alpha-D-glucuronate = 8-iso-prostaglandin F2alpha-glucuronide + UDP + H(+). It catalyses the reaction 5-epi-5-F2t-IsoP + UDP-alpha-D-glucuronate = 5-epi-5-F2t-IsoP-glucuronide + UDP + H(+). The enzyme catalyses (5Z,8Z,11Z,14Z)-eicosatetraenoate + UDP-alpha-D-glucuronate = O-[(5Z),(8Z),(11Z),(14Z)-eicosatetraenoyl]-beta-D-glucuronate + UDP. The catalysed reaction is 15-hydroxy-(5Z,8Z,11Z,13E)-eicosatetraenoate + UDP-alpha-D-glucuronate = 15-O-(beta-D-glucuronosyl)-(5Z,8Z,11Z,14Z)-eicosatetraenoate + UDP + H(+). It carries out the reaction prostaglandin B1 + UDP-alpha-D-glucuronate = 15-O-(beta-D-glucuronosyl)-prostaglandin B1 + UDP + H(+). It catalyses the reaction (E)-ferulate + UDP-alpha-D-glucuronate = (E)-4-O-(beta-D-glucuronosyl)-ferulate + UDP + H(+). The enzyme catalyses (E)-ferulate + UDP-alpha-D-glucuronate = (E)-ferulic acid beta-D-glucuronate ester + UDP. The catalysed reaction is candesartan + UDP-alpha-D-glucuronate = candesartan O-beta-D-glucuronoside + UDP. It carries out the reaction SN-38 + UDP-alpha-D-glucuronate = SN-38 O-beta-D-glucuronide + UDP + H(+). It catalyses the reaction mycophenolate + UDP-alpha-D-glucuronate = mycophenolate 7-O-beta-D-glucuronide + UDP + H(+). Functionally, UDP-glucuronosyltransferase (UGT) that catalyzes phase II biotransformation reactions in which lipophilic substrates are conjugated with glucuronic acid to increase the metabolite's water solubility, thereby facilitating excretion into either the urine or bile. Essential for the elimination and detoxification of drugs, xenobiotics and endogenous compounds. Catalyzes the glucuronidation of endogenous estrogen hormones such as estradiol and estrone. Involved in the glucuronidation of arachidonic acid (AA) and AA-derived eicosanoids including 15-HETE, PGB1 and F2-isoprostanes (8-iso-PGF2alpha and 5-epi-5-F2t-IsoP). Glucuronates the phytochemical ferulic acid efficently at both the phenolic or the carboxylic acid group. Also catalyzes the glucuronidation of the isoflavones genistein, daidzein, glycitein, formononetin, biochanin A and prunetin, which are phytoestrogens with anticancer and cardiovascular properties. Involved in the glucuronidation of the AGTR1 angiotensin receptor antagonist caderastan, a drug which can inhibit the effect of angiotensin II. Involved in the biotransformation of 7-ethyl-10-hydroxycamptothecin (SN-38), the pharmacologically active metabolite of the anticancer drug irinotecan. Also metabolizes mycophenolate, an immunosuppressive agent. Its function is as follows. Lacks UGT glucuronidation activity but acts as a negative regulator of isoform 1. This Homo sapiens (Human) protein is UDP-glucuronosyltransferase 1A9.